The primary structure comprises 485 residues: NADH-quinone oxidoreductase subunit N (485 aa).

The next 14 helical transmembrane spans lie at 8-28, 35-55, 71-91, 105-125, 127-147, 159-179, 203-223, 235-255, 271-291, 297-317, 326-346, 373-393, 408-430, and 455-475; these read LIAL…MLSI, FLNA…LWFV, GFAM…CTFA, FYLL…ANHL, ALFL…GYAF, YTIL…LVYA, LLAG…LAPF, PAPV…GVVM, VVLG…ALSQ, LLGY…IALQ, VGVY…VVSL, AAVM…LGFI, WWLV…RVAV, and IVVL…QPLI.

Belongs to the complex I subunit 2 family. NDH-1 is composed of 13 different subunits. Subunits NuoA, H, J, K, L, M, N constitute the membrane sector of the complex.

The protein resides in the cell inner membrane. The enzyme catalyses a quinone + NADH + 5 H(+)(in) = a quinol + NAD(+) + 4 H(+)(out). Functionally, NDH-1 shuttles electrons from NADH, via FMN and iron-sulfur (Fe-S) centers, to quinones in the respiratory chain. The immediate electron acceptor for the enzyme in this species is believed to be ubiquinone. Couples the redox reaction to proton translocation (for every two electrons transferred, four hydrogen ions are translocated across the cytoplasmic membrane), and thus conserves the redox energy in a proton gradient. The sequence is that of NADH-quinone oxidoreductase subunit N from Salmonella paratyphi C (strain RKS4594).